Consider the following 496-residue polypeptide: E1B 55 kDa protein (496 aa).

Residues 1–74 (MERRNPSERG…EPESRPGPSG (74 aa)) form a disordered region. Over residues 45 to 61 (GGAAAAAGGSQAAAAGA) the composition is skewed to low complexity. Residues serine 490 and serine 491 each carry the phosphoserine modification. A Phosphothreonine modification is found at threonine 495.

The protein belongs to the adenoviridae E1B 55 kDa protein family. As to quaternary structure, interacts with host PML-4 and PML-5; this interaction promotes efficient subnuclear targeting of E1B-55K to PML nuclear bodies. Interacts with E4-ORF3 protein. Interacts with E4-ORF6 protein. Phosphorylation at the C-terminus affects the subcellular location.

Its subcellular location is the host nucleus. The protein localises to the host cytoplasm. In terms of biological role, plays a major role to prevent cellular inhibition of viral genome replication. Assembles an SCF-like E3 ubiquitin ligase complex based on the cellular proteins ELOB, ELOC, CUL5 and RBX1, in cooperation with viral E4orf6. This viral RING-type ligase ubiquitinates cellular substrates and targets them to proteasomal degradation: TP53/p53, LIG4, MRE11-RAD50-NBS1 (MRN) complex, ITGA3, DAXX and BLM. E1B-55K probably acts as the substrate-specific adapter of the SCF-like E3 ubiquitin ligase complex. Degradation of host TP53/p53 activity is essential for preventing E1A-induced TP53 accumulation that would otherwise lead to cell apoptosis and growth arrest. E1B-55K also inactivates TP53 transcription-factor activity by binding its transactivation domain. E1B-55K also functions as a SUMO1 E3 ligase for TP53 which causes the latter to be sequestered in promyelocytic leukemia (PML) nuclear bodies thereby contributing to maximal inhibition of TP53 function. This chain is E1B 55 kDa protein, found in Homo sapiens (Human).